The following is a 422-amino-acid chain: Dihydrolipoyllysine-residue succinyltransferase component of 2-oxoglutarate dehydrogenase complex (422 aa).

One can recognise a Lipoyl-binding domain in the interval 1–76; the sequence is MPEVKVPELA…EVGQAIAVIG (76 aa). Position 42 is an N6-lipoyllysine (Lys-42). Residues 77-184 are disordered; sequence EGSGNASKEN…APAKEEKKYN (108 aa). 2 stretches are compositionally biased toward polar residues: residues 80 to 94 and 114 to 130; these read GNAS…TPQQ and EVNQ…NATP. In terms of domain architecture, Peripheral subunit-binding (PSBD) spans 127 to 163; sequence NATPSARRYARENGVNLAEVSPKTNDVVRKEDIDKKQ. The segment covering 152 to 163 has biased composition (basic and acidic residues); the sequence is DVVRKEDIDKKQ. Residues 164–176 show a composition bias toward low complexity; it reads QAPASTQTTQQAP. Residues His-393 and Asp-397 contribute to the active site.

Belongs to the 2-oxoacid dehydrogenase family. Forms a 24-polypeptide structural core with octahedral symmetry. Part of the 2-oxoglutarate dehydrogenase (OGDH) complex composed of E1 (2-oxoglutarate dehydrogenase), E2 (dihydrolipoamide succinyltransferase) and E3 (dihydrolipoamide dehydrogenase); the complex contains multiple copies of the three enzymatic components (E1, E2 and E3). (R)-lipoate serves as cofactor.

The catalysed reaction is N(6)-[(R)-dihydrolipoyl]-L-lysyl-[protein] + succinyl-CoA = N(6)-[(R)-S(8)-succinyldihydrolipoyl]-L-lysyl-[protein] + CoA. The protein operates within amino-acid degradation; L-lysine degradation via saccharopine pathway; glutaryl-CoA from L-lysine: step 6/6. E2 component of the 2-oxoglutarate dehydrogenase (OGDH) complex which catalyzes the second step in the conversion of 2-oxoglutarate to succinyl-CoA and CO(2). The polypeptide is Dihydrolipoyllysine-residue succinyltransferase component of 2-oxoglutarate dehydrogenase complex (odhB) (Staphylococcus aureus (strain bovine RF122 / ET3-1)).